We begin with the raw amino-acid sequence, 295 residues long: Ventral anterior homeobox 1a (295 aa).

The span at 20–33 (ISKPKDNKEIRETQ) shows a compositional bias: basic and acidic residues. The tract at residues 20 to 63 (ISKPKDNKEIRETQAKMPSTYLKEQPGTYPAPGSSELCAKNKSS) is disordered. The homeobox DNA-binding region spans 97 to 156 (PKRSRTSFTAEQLYRLEMEFQRCQYVVGRERTDLSRQLNLSETQVKVWFQNRRTKQKKDQ). Positions 203–226 (RAPNSSGPGTRSLATVTSTPPHQP) are disordered. Positions 204–222 (APNSSGPGTRSLATVTSTP) are enriched in polar residues.

The protein belongs to the EMX homeobox family.

It is found in the nucleus. May play a role in the specification and maintenance of basal forebrain identity. In Xenopus laevis (African clawed frog), this protein is Ventral anterior homeobox 1a (vax1-a).